The following is a 183-amino-acid chain: Triggering receptor expressed on myeloid cells 3 (183 aa).

Residues 1-19 (MSPLLLWLGLMLCVSGLQA) form the signal peptide. Residues 20–138 (GDEEEHKCFL…AWCQGKPVMV (119 aa)) lie on the Extracellular side of the membrane. An Ig-like V-type domain is found at 30-128 (EGENLTLTCP…VIILRQRIRL (99 aa)). Asparagine 33 is a glycosylation site (N-linked (GlcNAc...) asparagine). A disulfide bridge connects residues cysteine 38 and cysteine 110. The helical transmembrane segment at 139 to 159 (IVLTCGFILNKGLVFSVLFVF) threads the bilayer. Residues 160 to 183 (LCKAGPKVLQPSKTSKVQGVSEKQ) lie on the Cytoplasmic side of the membrane.

As to quaternary structure, interacts with TYROBP/DAP12. Expressed in macrophages and in T-cells.

It localises to the cell membrane. Forms a receptor signaling complex with TYROBP/DAP12 which mediates activation of macrophages as part of the innate immune response. The sequence is that of Triggering receptor expressed on myeloid cells 3 from Mus musculus (Mouse).